The chain runs to 465 residues: Siroheme synthase (465 aa).

Positions 1 to 203 (MDFLPLFHSL…GRPAEAERLL (203 aa)) are precorrin-2 dehydrogenase /sirohydrochlorin ferrochelatase. Residues 22-23 (EV) and 43-44 (PQ) each bind NAD(+). Ser-128 is subject to Phosphoserine. The tract at residues 217–465 (GEVYLVGAGP…AWFEGAREDA (249 aa)) is uroporphyrinogen-III C-methyltransferase. S-adenosyl-L-methionine is bound at residue Pro-226. The active-site Proton acceptor is Asp-249. The active-site Proton donor is Lys-271. S-adenosyl-L-methionine-binding positions include 302-304 (GGD), Ile-307, 332-333 (TA), Met-384, and Gly-413.

In the N-terminal section; belongs to the precorrin-2 dehydrogenase / sirohydrochlorin ferrochelatase family. It in the C-terminal section; belongs to the precorrin methyltransferase family.

It catalyses the reaction uroporphyrinogen III + 2 S-adenosyl-L-methionine = precorrin-2 + 2 S-adenosyl-L-homocysteine + H(+). It carries out the reaction precorrin-2 + NAD(+) = sirohydrochlorin + NADH + 2 H(+). The catalysed reaction is siroheme + 2 H(+) = sirohydrochlorin + Fe(2+). It functions in the pathway cofactor biosynthesis; adenosylcobalamin biosynthesis; precorrin-2 from uroporphyrinogen III: step 1/1. It participates in cofactor biosynthesis; adenosylcobalamin biosynthesis; sirohydrochlorin from precorrin-2: step 1/1. Its pathway is porphyrin-containing compound metabolism; siroheme biosynthesis; precorrin-2 from uroporphyrinogen III: step 1/1. The protein operates within porphyrin-containing compound metabolism; siroheme biosynthesis; siroheme from sirohydrochlorin: step 1/1. It functions in the pathway porphyrin-containing compound metabolism; siroheme biosynthesis; sirohydrochlorin from precorrin-2: step 1/1. Functionally, multifunctional enzyme that catalyzes the SAM-dependent methylations of uroporphyrinogen III at position C-2 and C-7 to form precorrin-2 via precorrin-1. Then it catalyzes the NAD-dependent ring dehydrogenation of precorrin-2 to yield sirohydrochlorin. Finally, it catalyzes the ferrochelation of sirohydrochlorin to yield siroheme. The sequence is that of Siroheme synthase from Pseudomonas aeruginosa (strain ATCC 15692 / DSM 22644 / CIP 104116 / JCM 14847 / LMG 12228 / 1C / PRS 101 / PAO1).